Reading from the N-terminus, the 1192-residue chain is DNA topoisomerase 2 (1192 aa).

Residues Asn-64, Asn-95, and 142-149 contribute to the ATP site; that span reads GTNGVGLK. Glu-438, Asp-539, and Asp-541 together coordinate Mg(2+). Residues 707–1174 enclose the Topo IIA-type catalytic domain; sequence IPNFLDGMTR…PGASVWLEEI (468 aa). Residue Tyr-800 is the O-(5'-phospho-DNA)-tyrosine intermediate of the active site.

Belongs to the type II topoisomerase family. Requires Mg(2+) as cofactor. It depends on Mn(2+) as a cofactor. Ca(2+) serves as cofactor.

It is found in the host cytoplasm. The enzyme catalyses ATP-dependent breakage, passage and rejoining of double-stranded DNA.. Its function is as follows. Type II topoisomerase. Processively relaxes supercoiled DNA. Displays DNA-supercoiling activity only when associated with the viral histone-like protein. In African swine fever virus (isolate Tick/South Africa/Pretoriuskop Pr4/1996) (ASFV), this protein is DNA topoisomerase 2.